A 437-amino-acid polypeptide reads, in one-letter code: Glutamate-1-semialdehyde 2,1-aminomutase (437 aa).

N6-(pyridoxal phosphate)lysine is present on Lys274.

This sequence belongs to the class-III pyridoxal-phosphate-dependent aminotransferase family. HemL subfamily. In terms of assembly, homodimer. Pyridoxal 5'-phosphate is required as a cofactor.

It localises to the cytoplasm. The catalysed reaction is (S)-4-amino-5-oxopentanoate = 5-aminolevulinate. Its pathway is porphyrin-containing compound metabolism; protoporphyrin-IX biosynthesis; 5-aminolevulinate from L-glutamyl-tRNA(Glu): step 2/2. The sequence is that of Glutamate-1-semialdehyde 2,1-aminomutase from Verminephrobacter eiseniae (strain EF01-2).